The sequence spans 319 residues: HTH-type transcriptional regulator YidZ (319 aa).

In terms of domain architecture, HTH lysR-type spans L8–T65. The H-T-H motif DNA-binding region spans V25–A44.

It belongs to the LysR transcriptional regulatory family.

Functionally, involved in anaerobic NO protection. The polypeptide is HTH-type transcriptional regulator YidZ (Escherichia coli O17:K52:H18 (strain UMN026 / ExPEC)).